We begin with the raw amino-acid sequence, 155 residues long: Aspartate carbamoyltransferase regulatory chain (155 aa).

4 residues coordinate Zn(2+): Cys109, Cys114, Cys138, and Cys141.

Belongs to the PyrI family. In terms of assembly, contains catalytic and regulatory chains. Zn(2+) is required as a cofactor.

Functionally, involved in allosteric regulation of aspartate carbamoyltransferase. In Vibrio cholerae serotype O1 (strain ATCC 39315 / El Tor Inaba N16961), this protein is Aspartate carbamoyltransferase regulatory chain.